A 341-amino-acid polypeptide reads, in one-letter code: 4-hydroxy-2-oxovalerate aldolase (341 aa).

Residues Val9–Met259 form the Pyruvate carboxyltransferase domain. Arg17–Asp18 is a substrate binding site. Position 18 (Asp18) interacts with Mn(2+). Catalysis depends on His21, which acts as the Proton acceptor. Positions 171 and 198 each coordinate substrate. Mn(2+)-binding residues include His198 and His200. Tyr289 serves as a coordination point for substrate.

It belongs to the 4-hydroxy-2-oxovalerate aldolase family.

The enzyme catalyses (S)-4-hydroxy-2-oxopentanoate = acetaldehyde + pyruvate. The polypeptide is 4-hydroxy-2-oxovalerate aldolase (Bacillus cereus (strain ATCC 10987 / NRS 248)).